The sequence spans 233 residues: PEP2-like protein NECHADRAFT_97050 (233 aa).

This sequence belongs to the PEP2 family.

May contribute to the ability of the fungus to cause disease on pea plants. The sequence is that of PEP2-like protein NECHADRAFT_97050 from Fusarium vanettenii (strain ATCC MYA-4622 / CBS 123669 / FGSC 9596 / NRRL 45880 / 77-13-4) (Fusarium solani subsp. pisi).